The sequence spans 497 residues: PHD finger protein 10 (497 aa).

Low complexity predominate over residues 1–13 (MTAAGPGAAPSPG). The interval 1–61 (MTAAGPGAAP…SSRSCETSSQ (61 aa)) is disordered. Residues S11, S35, and S49 each carry the phosphoserine modification. The segment at 88–184 (MLQEQVSEYL…HYKEYSQMQQ (97 aa)) is essential to induce neural progenitor proliferation. Residues 88–294 (MLQEQVSEYL…PPLDPELPAL (207 aa)) are SAY. K240 participates in a covalent cross-link: Glycyl lysine isopeptide (Lys-Gly) (interchain with G-Cter in SUMO2). At S269 the chain carries Phosphoserine. Low complexity predominate over residues 284–295 (EPPLDPELPALD). The interval 284-368 (EPPLDPELPA…RSVLSKSAPG (85 aa)) is disordered. Residues 291-333 (LPALDSDGDSDDGEDGGGDEKRKNKGTSDSSSGNVSEGDSPPD) are essential to induce neural progenitor proliferation. Phosphoserine is present on residues S296, S300, S326, and S330. Acidic residues predominate over residues 296–307 (SDGDSDDGEDGG). Residues 317-327 (TSDSSSGNVSE) show a composition bias toward polar residues. A compositionally biased stretch (basic and acidic residues) spans 337-358 (DTFHGRQKSKDKMATPRKDGSK). The PHD-type 1; degenerate zinc-finger motif lies at 378 to 435 (LCGICLKGKESNKKGKAESLIHCSQCDNSGHPSCLDMTMELVSMIKTYPWQCMECKTC). K384 participates in a covalent cross-link: Glycyl lysine isopeptide (Lys-Gly) (interchain with G-Cter in SUMO2). A PHD-type 2; degenerate zinc finger spans residues 437 to 480 (ICGQPHHEEEMMFCDVCDRGYHTFCVGLGAIPSGRWICDCCQRA).

It belongs to the SAYP family. As to quaternary structure, component of neural progenitors-specific chromatin remodeling complex (npBAF complex) composed of at least, ARID1A/BAF250A or ARID1B/BAF250B, SMARCD1/BAF60A, SMARCD3/BAF60C, SMARCA2/BRM/BAF190B, SMARCA4/BRG1/BAF190A, SMARCB1/BAF47, SMARCC1/BAF155, SMARCE1/BAF57, SMARCC2/BAF170, PHF10/BAF45A, ACTL6A/BAF53A and actin. Interacts with ACTL6A/BAF53A, SMARCA2/BRM/BAF190B, SMARCA4/BRG1/BAF190A and PBRM1/BAF180. As to expression, widely expressed. Expressed selectively in neural stem and progenitor cells (at protein level).

The protein resides in the nucleus. Functionally, involved in transcription activity regulation by chromatin remodeling. Belongs to the neural progenitors-specific chromatin remodeling complex (npBAF complex) and is required for the proliferation of neural progenitors. During neural development a switch from a stem/progenitor to a post-mitotic chromatin remodeling mechanism occurs as neurons exit the cell cycle and become committed to their adult state. The transition from proliferating neural stem/progenitor cells to post-mitotic neurons requires a switch in subunit composition of the npBAF and nBAF complexes. As neural progenitors exit mitosis and differentiate into neurons, npBAF complexes which contain ACTL6A/BAF53A and PHF10/BAF45A, are exchanged for homologous alternative ACTL6B/BAF53B and DPF1/BAF45B or DPF3/BAF45C subunits in neuron-specific complexes (nBAF). The npBAF complex is essential for the self-renewal/proliferative capacity of the multipotent neural stem cells. The nBAF complex along with CREST plays a role regulating the activity of genes essential for dendrite growth. This chain is PHD finger protein 10 (Phf10), found in Mus musculus (Mouse).